Reading from the N-terminus, the 91-residue chain is Small ribosomal subunit protein uS19 (91 aa).

This sequence belongs to the universal ribosomal protein uS19 family.

In terms of biological role, protein S19 forms a complex with S13 that binds strongly to the 16S ribosomal RNA. This is Small ribosomal subunit protein uS19 from Synechococcus sp. (strain CC9605).